Here is a 316-residue protein sequence, read N- to C-terminus: Probable protein-L-isoaspartate O-methyltransferase (316 aa).

S-adenosyl-L-homocysteine contacts are provided by residues 103-106 (ATIS), histidine 111, serine 136, 157-158 (EH), 187-188 (DG), threonine 263, and glutamine 268. The active site involves serine 106.

It belongs to the methyltransferase superfamily. L-isoaspartyl/D-aspartyl protein methyltransferase family.

The protein localises to the cytoplasm. Its subcellular location is the cytosol. The enzyme catalyses [protein]-L-isoaspartate + S-adenosyl-L-methionine = [protein]-L-isoaspartate alpha-methyl ester + S-adenosyl-L-homocysteine. Functionally, initiates the repair of damaged proteins by catalyzing methyl esterification of L-isoaspartyl and D-aspartyl residues produced by spontaneous isomerization and racemization of L-aspartyl and L-asparaginyl residues in aging peptides and proteins. This chain is Probable protein-L-isoaspartate O-methyltransferase (pcmA), found in Dictyostelium discoideum (Social amoeba).